Here is a 938-residue protein sequence, read N- to C-terminus: MTDYKNTLNLPDTGFPMRGDLAKREPGMLERWYEQDLYGIICQARKGKKTFILHDGPPYANGSIHIGHSVNKILKDIIIKSKGLMGYDSPYVPGWDCHGLPIELKVEQLIGKPGEKVSAAEFRTACRRYAAEQVEGQKKDFIRLGVLGDWEHPYLTMNFATEANIIRALGKIIANGHLHKGAKPVHWCIDCRSALAEAEVEYYDRTSPSIDVAFAADDVRAVAAKFGAADFAGQISLIIWTTTPWTLPANRAIAVHPDFDYQLVEVEGQGYILAADLVDSVMARAGITCWTVLGSAKGSALELLRFRHPFMGFDVPAILGQHVTLDAGTGAVHTAPGHGPDDYVIGQQYGLEVANPVGPDGCYLPGTLPALDGLQVFKANDVVINLLCDSGALLHVEKLQHSYPHCWRHKTSIIFRATPQWFVSMDQRGLRKQSLAEIKDVQWIPGWGQARIETMVANRPDWCISRQRTWGVPMALFVHNETEALHPRTIELMESVAQRVEQDGIQAWWDLDPAEILGDDAAHYHKVPDTLDVWFDSGSTHSSIVAVRPEFEGHAPDMYLEGSDQHRGWFMSSLMISTAMHGKAPYRQVLTHGFTVDGQGRKMSKSVGNVVSPQQVMDKLGADILRLWVASTDYTGEMAVSDEILKRSADAYRRIRNTARFLLANLNGFDPARHSVSPEQMVVLDRWAVGRAQAAQAEIVAAYDSYDFHNVVQRMMQFCSVEMGSFYLDIIKDRQYTTKADSIARRSCQTALYHIIEALVRWMAPIMSFTADEIWGFMPGERAQYVFTEEWYDGLFGLDAAQPLNDAYWQILLQVRSETNKVIEQARADKRIGGSLEARVTLYAEPDLAASLRELGDELYFTLLTSNAVVADYADAGDDAVQCEGLKGLKIALAKAEGEKCPRCWHYETDIGQHADHPEICGRCVTNVAGPGEERKFV.

The short motif at 58 to 68 (PYANGSIHIGH) is the 'HIGH' region element. An L-isoleucyl-5'-AMP-binding site is contributed by glutamate 561. The short motif at 602-606 (KMSKS) is the 'KMSKS' region element. Residue lysine 605 participates in ATP binding. Residues cysteine 901, cysteine 904, cysteine 921, and cysteine 924 each contribute to the Zn(2+) site.

It belongs to the class-I aminoacyl-tRNA synthetase family. IleS type 1 subfamily. Monomer. Requires Zn(2+) as cofactor.

The protein localises to the cytoplasm. It catalyses the reaction tRNA(Ile) + L-isoleucine + ATP = L-isoleucyl-tRNA(Ile) + AMP + diphosphate. In terms of biological role, catalyzes the attachment of isoleucine to tRNA(Ile). As IleRS can inadvertently accommodate and process structurally similar amino acids such as valine, to avoid such errors it has two additional distinct tRNA(Ile)-dependent editing activities. One activity is designated as 'pretransfer' editing and involves the hydrolysis of activated Val-AMP. The other activity is designated 'posttransfer' editing and involves deacylation of mischarged Val-tRNA(Ile). This Sodalis glossinidius (strain morsitans) protein is Isoleucine--tRNA ligase.